A 208-amino-acid polypeptide reads, in one-letter code: NAD(P)H-quinone oxidoreductase subunit I (208 aa).

4Fe-4S ferredoxin-type domains follow at residues 55–84 (GRIHYEFDKCIACEVCVRVCPINLPVVDWV) and 95–124 (RNYSIDFGVCIFCGNCVEYCPTNCLSMTEE). [4Fe-4S] cluster contacts are provided by Cys-64, Cys-67, Cys-70, Cys-74, Cys-104, Cys-107, Cys-110, and Cys-114.

The protein belongs to the complex I 23 kDa subunit family. As to quaternary structure, NDH-1 is composed of at least 11 different subunits. [4Fe-4S] cluster is required as a cofactor.

It localises to the cellular thylakoid membrane. It carries out the reaction a plastoquinone + NADH + (n+1) H(+)(in) = a plastoquinol + NAD(+) + n H(+)(out). The enzyme catalyses a plastoquinone + NADPH + (n+1) H(+)(in) = a plastoquinol + NADP(+) + n H(+)(out). In terms of biological role, NDH-1 shuttles electrons from an unknown electron donor, via FMN and iron-sulfur (Fe-S) centers, to quinones in the respiratory and/or the photosynthetic chain. The immediate electron acceptor for the enzyme in this species is believed to be plastoquinone. Couples the redox reaction to proton translocation, and thus conserves the redox energy in a proton gradient. The protein is NAD(P)H-quinone oxidoreductase subunit I of Prochlorococcus marinus (strain MIT 9301).